A 550-amino-acid chain; its full sequence is CTP synthase (550 aa).

Residues 1-270 (MTKYVFVTGG…DRIICEELKL (270 aa)) form an amidoligase domain region. Ser13 provides a ligand contact to CTP. Ser13 is a binding site for UTP. Residues 14–19 (SLGKGI) and Asp71 each bind ATP. Mg(2+)-binding residues include Asp71 and Glu144. CTP contacts are provided by residues 151-153 (DIE), 191-196 (KTKPTQ), and Lys227. UTP-binding positions include 191-196 (KTKPTQ) and Lys227. The 253-residue stretch at 295-547 (TIGMVGKYVD…VEAALANKQA (253 aa)) folds into the Glutamine amidotransferase type-1 domain. Gly356 provides a ligand contact to L-glutamine. Cys383 serves as the catalytic Nucleophile; for glutamine hydrolysis. L-glutamine-binding positions include 384–387 (LGMQ), Glu407, and Arg473. Catalysis depends on residues His520 and Glu522.

The protein belongs to the CTP synthase family. As to quaternary structure, homotetramer.

It carries out the reaction UTP + L-glutamine + ATP + H2O = CTP + L-glutamate + ADP + phosphate + 2 H(+). It catalyses the reaction L-glutamine + H2O = L-glutamate + NH4(+). The catalysed reaction is UTP + NH4(+) + ATP = CTP + ADP + phosphate + 2 H(+). Its pathway is pyrimidine metabolism; CTP biosynthesis via de novo pathway; CTP from UDP: step 2/2. With respect to regulation, allosterically activated by GTP, when glutamine is the substrate; GTP has no effect on the reaction when ammonia is the substrate. The allosteric effector GTP functions by stabilizing the protein conformation that binds the tetrahedral intermediate(s) formed during glutamine hydrolysis. Inhibited by the product CTP, via allosteric rather than competitive inhibition. Catalyzes the ATP-dependent amination of UTP to CTP with either L-glutamine or ammonia as the source of nitrogen. Regulates intracellular CTP levels through interactions with the four ribonucleotide triphosphates. The chain is CTP synthase from Burkholderia lata (strain ATCC 17760 / DSM 23089 / LMG 22485 / NCIMB 9086 / R18194 / 383).